Here is a 1039-residue protein sequence, read N- to C-terminus: Error-prone DNA polymerase (1039 aa).

Belongs to the DNA polymerase type-C family. DnaE2 subfamily.

The protein resides in the cytoplasm. The enzyme catalyses DNA(n) + a 2'-deoxyribonucleoside 5'-triphosphate = DNA(n+1) + diphosphate. Functionally, DNA polymerase involved in damage-induced mutagenesis and translesion synthesis (TLS). It is not the major replicative DNA polymerase. The sequence is that of Error-prone DNA polymerase from Corynebacterium diphtheriae (strain ATCC 700971 / NCTC 13129 / Biotype gravis).